Here is a 991-residue protein sequence, read N- to C-terminus: UvrABC system protein A (991 aa).

48-55 (GLSGSGKS) contributes to the ATP binding site. ABC transporter domains lie at 345–624 (WAKS…PKSL) and 644–972 (NHRR…KFLE). An ATP-binding site is contributed by 676 to 683 (GVSGGGKS). Residues 775–801 (CEACQGDGVIKIEMHFLPDVYVTCDVC) form a C4-type zinc finger.

Belongs to the ABC transporter superfamily. UvrA family. In terms of assembly, forms a heterotetramer with UvrB during the search for lesions.

Its subcellular location is the cytoplasm. The UvrABC repair system catalyzes the recognition and processing of DNA lesions. UvrA is an ATPase and a DNA-binding protein. A damage recognition complex composed of 2 UvrA and 2 UvrB subunits scans DNA for abnormalities. When the presence of a lesion has been verified by UvrB, the UvrA molecules dissociate. This is UvrABC system protein A from Bradyrhizobium diazoefficiens (strain JCM 10833 / BCRC 13528 / IAM 13628 / NBRC 14792 / USDA 110).